The chain runs to 458 residues: Exodeoxyribonuclease 7 large subunit (458 aa).

Belongs to the XseA family. In terms of assembly, heterooligomer composed of large and small subunits.

The protein localises to the cytoplasm. The catalysed reaction is Exonucleolytic cleavage in either 5'- to 3'- or 3'- to 5'-direction to yield nucleoside 5'-phosphates.. In terms of biological role, bidirectionally degrades single-stranded DNA into large acid-insoluble oligonucleotides, which are then degraded further into small acid-soluble oligonucleotides. This chain is Exodeoxyribonuclease 7 large subunit, found in Sodalis glossinidius (strain morsitans).